The primary structure comprises 273 residues: uncharacterized protein (273 aa).

It belongs to the AtsA family.

This is an uncharacterized protein from Mycobacterium tuberculosis (strain CDC 1551 / Oshkosh).